The sequence spans 322 residues: Protein farnesyltransferase/geranylgeranyltransferase type-1 subunit alpha (322 aa).

The tract at residues 1–27 (MSSSEEDDGYVPFSKRPEWSDVKPLAQ) is disordered. PFTA repeat units lie at residues 62 to 95 (RVLDLLEEVIQENPSNYTIWYYRREVLKAIEQDE), 103 to 136 (QEMNLLNDMGETDPKNYQIWNHRRFIVEKYIGSD), 138 to 171 (KEKEFLSGVLLEDAKNYHAWSHRQWLLKTYRDWN), 173 to 205 (ELAMVDKLLSLDHRNNSVWNHRFFVISNLNPSP), 213 to 246 (REVEFAFNHIRHSPNNESPWSYLKGLFKGQKIST), and 287 to 321 (NSLNICKLLSETIDPIHKNYWNFKYNTISDQLKLI).

Belongs to the protein prenyltransferase subunit alpha family. Heterodimer of fntA and fntB (farnesyltransferase). Heterodimer of an alpha and a beta subunit. It depends on Mg(2+) as a cofactor.

The catalysed reaction is L-cysteinyl-[protein] + (2E,6E)-farnesyl diphosphate = S-(2E,6E)-farnesyl-L-cysteinyl-[protein] + diphosphate. It carries out the reaction geranylgeranyl diphosphate + L-cysteinyl-[protein] = S-geranylgeranyl-L-cysteinyl-[protein] + diphosphate. Its function is as follows. Catalyzes the transfer of a farnesyl or geranyl-geranyl moiety from farnesyl or geranyl-geranyl diphosphate to a cysteine at the fourth position from the C-terminus of several proteins having the C-terminal sequence Cys-aliphatic-aliphatic-X. The alpha subunit is thought to participate in a stable complex with the substrate. The beta subunit binds the peptide substrate. The protein is Protein farnesyltransferase/geranylgeranyltransferase type-1 subunit alpha (fntA) of Dictyostelium discoideum (Social amoeba).